The chain runs to 498 residues: Putative BTB/POZ domain-containing protein L788 (498 aa).

The BTB domain occupies 28-99 (TDIILVLEDD…FYGQKIKSGN (72 aa)).

This sequence belongs to the mimivirus BTB/WD family.

The sequence is that of Putative BTB/POZ domain-containing protein L788 from Acanthamoeba polyphaga (Amoeba).